The following is a 498-amino-acid chain: Guanosine-5'-triphosphate,3'-diphosphate pyrophosphatase (498 aa).

Belongs to the GppA/Ppx family. GppA subfamily.

The enzyme catalyses guanosine 3'-diphosphate 5'-triphosphate + H2O = guanosine 3',5'-bis(diphosphate) + phosphate + H(+). It participates in purine metabolism; ppGpp biosynthesis; ppGpp from GTP: step 2/2. Its function is as follows. Catalyzes the conversion of pppGpp to ppGpp. Guanosine pentaphosphate (pppGpp) is a cytoplasmic signaling molecule which together with ppGpp controls the 'stringent response', an adaptive process that allows bacteria to respond to amino acid starvation, resulting in the coordinated regulation of numerous cellular activities. In Yersinia pseudotuberculosis serotype O:1b (strain IP 31758), this protein is Guanosine-5'-triphosphate,3'-diphosphate pyrophosphatase.